The chain runs to 91 residues: Small ribosomal subunit protein uS19 (91 aa).

It belongs to the universal ribosomal protein uS19 family.

Functionally, protein S19 forms a complex with S13 that binds strongly to the 16S ribosomal RNA. The chain is Small ribosomal subunit protein uS19 from Burkholderia cenocepacia (strain HI2424).